A 435-amino-acid polypeptide reads, in one-letter code: Cell adhesion molecule 2 (435 aa).

The N-terminal stretch at 1–24 is a signal peptide; that stretch reads MIWKRSAVLRFYSVCGLLLQGSQG. Topologically, residues 25 to 367 are extracellular; sequence QFPLTQNVTV…ALAGQNGPDH (343 aa). Residues 27-119 enclose the Ig-like V-type domain; that stretch reads PLTQNVTVVE…PVKTSKAYLT (93 aa). 2 N-linked (GlcNAc...) asparagine glycosylation sites follow: N31 and N51. 3 disulfides stabilise this stretch: C44–C104, C146–C203, and C248–C296. 2 Ig-like C2-type domains span residues 127-219 and 227-312; these read PQIS…VAMQ and PSVK…YVLI. The N-linked (GlcNAc...) asparagine glycan is linked to N291. A helical transmembrane segment spans residues 368 to 388; it reads ALIGGIVAVVVFVTLCSIFLL. Residues 389 to 435 lie on the Cytoplasmic side of the membrane; it reads GRYLARHKGTYLTNEAKGAEDAPDADTAIINAEGSQVNAEEKKEYFI. S423 is subject to Phosphoserine.

It belongs to the nectin family.

Its subcellular location is the cell membrane. The protein localises to the synapse. It is found in the cell projection. It localises to the axon. Adhesion molecule that engages in homo- and heterophilic interactions with the other nectin-like family members, leading to cell aggregation. Important for synapse organization, providing regulated trans-synaptic adhesion. Preferentially binds to oligodendrocytes. Functionally, (Microbial infection) Induces cell fusion in neuron infected by a neuropathogenic strain of measles. Interacts with measles hemagglutinin to trigger hyperfusogenic F-mediated membrane fusion and presumably transsynaptic cell-to-cell transmission of the virus. The polypeptide is Cell adhesion molecule 2 (CADM2) (Homo sapiens (Human)).